Consider the following 266-residue polypeptide: Putative carbamate hydrolase RutD (266 aa).

The AB hydrolase-1 domain maps to 14–115 (PVVVLISGLG…TMLVSVNGWL (102 aa)).

The protein belongs to the AB hydrolase superfamily. Hydrolase RutD family.

It catalyses the reaction carbamate + 2 H(+) = NH4(+) + CO2. Functionally, involved in pyrimidine catabolism. May facilitate the hydrolysis of carbamate, a reaction that can also occur spontaneously. This Shigella flexneri serotype 5b (strain 8401) protein is Putative carbamate hydrolase RutD.